Here is a 949-residue protein sequence, read N- to C-terminus: Protocadherin alpha-11 (949 aa).

An N-terminal signal peptide occupies residues 1–29 (MFGFQRRGLGTPRLQLWLLLLEFWEVGSG). Cadherin domains are found at residues 30–133 (QLHY…PPVF), 157–242 (ASDA…DPDF), 243–349 (DKSE…SPEV), 350–454 (AVTS…APAF), 455–564 (AQPE…APAL), and 580–677 (VPRS…APKA). Over 30 to 696 (QLHYSVSEEA…SPEAALVDVN (667 aa)) the chain is Extracellular. Asn265 and Asn304 each carry an N-linked (GlcNAc...) asparagine glycan. Asn547 is a glycosylation site (N-linked (GlcNAc...) asparagine). Residues 697 to 717 (VYLIIAICVVSSLLVLTLLLY) form a helical membrane-spanning segment. Topologically, residues 718–949 (TALWCSATPT…GNSTTDNSDQ (232 aa)) are cytoplasmic. PXXP repeat units follow at residues 733-736 (PGKP) and 773-776 (PSLP). Positions 733–893 (PGKPTLVCSR…PDKFIIPGSP (161 aa)) are 6 X 4 AA repeats of P-X-X-P. Disordered regions lie at residues 753–807 (RRQR…DWRY), 826–858 (ILRA…PPVG), and 870–889 (YGPG…KFII). Residues 780–789 (NKEEEGERQE) show a composition bias toward basic and acidic residues. PXXP repeat units follow at residues 795 to 798 (PGQP), 831 to 834 (PGGP), 872 to 875 (PGNP), and 890 to 893 (PGSP). Residues 900–949 (QEPANSQIDKSDFITFGKKEETKKKKKKKKGNKTQEKKEKGNSTTDNSDQ) form a disordered region. Positions 908–922 (DKSDFITFGKKEETK) are enriched in basic and acidic residues.

Its subcellular location is the cell membrane. In terms of biological role, potential calcium-dependent cell-adhesion protein. May be involved in the establishment and maintenance of specific neuronal connections in the brain. The sequence is that of Protocadherin alpha-11 (PCDHA11) from Pan troglodytes (Chimpanzee).